The primary structure comprises 300 residues: MPSLFSSLLTTLVFHILIYYQINLVTVNIIMNCFQEKQFSRENLLKMPFRMVLTGGSGSGKTIYLLSLFSTLVKKYKHIFLFTPVYNPDYDGYIWPNHINFVSSQEALEYNLIRTKSNIEKCIAVAQNHKKSAHFLLIFDDVGDKLSKCNTLIEFLNFGRHLNTSIILLCQTYRHVPILGRANITHFCSFNISISDAENMLRSMPVKGKRKDILNMLNMIQTARSNNRLAIIIEDSVFCEGELRICTDTADKDVIEQKLNIDILVSQYSHMKKNLNTILESTKTKLCNSDQSSSSKNVSS.

This sequence belongs to the orthopoxvirus OPG160 protein family. In terms of assembly, interacts with protein OPG137.

Functionally, participates in viral DNA packaging and virion morphogenesis. This chain is DNA packaging protein OPG160 (OPG160), found in Monkeypox virus.